The sequence spans 662 residues: Bifunctional polymyxin resistance protein ArnA (662 aa).

The formyltransferase ArnAFT stretch occupies residues 1–307 (MTSKAVVFAY…ELGLVEGARL (307 aa)). H106 acts as the Proton donor; for formyltransferase activity in catalysis. Residues R116 and 138–142 (IERAD) each bind (6R)-10-formyltetrahydrofolate. The tract at residues 316-662 (RRTRVLILGV…EALREREAQA (347 aa)) is dehydrogenase ArnADH. NAD(+) contacts are provided by residues D349 and 370–371 (DI). Residues A395, Y400, and 434-435 (TS) contribute to the UDP-alpha-D-glucuronate site. E436 (proton acceptor; for decarboxylase activity) is an active-site residue. Residues R462, N493, 527-536 (RLVDGGAQKR), and Y614 each bind UDP-alpha-D-glucuronate. R620 functions as the Proton donor; for decarboxylase activity in the catalytic mechanism.

The protein in the N-terminal section; belongs to the Fmt family. UDP-L-Ara4N formyltransferase subfamily. It in the C-terminal section; belongs to the NAD(P)-dependent epimerase/dehydratase family. UDP-glucuronic acid decarboxylase subfamily. As to quaternary structure, homohexamer, formed by a dimer of trimers.

The catalysed reaction is UDP-alpha-D-glucuronate + NAD(+) = UDP-beta-L-threo-pentopyranos-4-ulose + CO2 + NADH. It catalyses the reaction UDP-4-amino-4-deoxy-beta-L-arabinose + (6R)-10-formyltetrahydrofolate = UDP-4-deoxy-4-formamido-beta-L-arabinose + (6S)-5,6,7,8-tetrahydrofolate + H(+). The protein operates within nucleotide-sugar biosynthesis; UDP-4-deoxy-4-formamido-beta-L-arabinose biosynthesis; UDP-4-deoxy-4-formamido-beta-L-arabinose from UDP-alpha-D-glucuronate: step 1/3. It functions in the pathway nucleotide-sugar biosynthesis; UDP-4-deoxy-4-formamido-beta-L-arabinose biosynthesis; UDP-4-deoxy-4-formamido-beta-L-arabinose from UDP-alpha-D-glucuronate: step 3/3. Its pathway is bacterial outer membrane biogenesis; lipopolysaccharide biosynthesis. Bifunctional enzyme that catalyzes the oxidative decarboxylation of UDP-glucuronic acid (UDP-GlcUA) to UDP-4-keto-arabinose (UDP-Ara4O) and the addition of a formyl group to UDP-4-amino-4-deoxy-L-arabinose (UDP-L-Ara4N) to form UDP-L-4-formamido-arabinose (UDP-L-Ara4FN). The modified arabinose is attached to lipid A and is required for resistance to polymyxin and cationic antimicrobial peptides. In Pseudomonas aeruginosa (strain UCBPP-PA14), this protein is Bifunctional polymyxin resistance protein ArnA.